The following is a 401-amino-acid chain: Phosrestin-1 (401 aa).

Belongs to the arrestin family. Inner and outer segments, and the inner plexiform regions of the retina.

Undergoes light-induced phosphorylation, probably plays an important role in the photoreceptor transduction. The chain is Phosrestin-1 (Arr2) from Drosophila miranda (Fruit fly).